The sequence spans 891 residues: Nitrate reductase [NAD(P)H] (891 aa).

The tract at residues 1–78 is disordered; sequence MAASVEYNRQ…VKDPRDEATS (78 aa). The span at 63–76 shows a compositional bias: basic and acidic residues; that stretch reads LDVEPSVKDPRDEA. Cysteine 168 is a Mo-molybdopterin binding site. Residues 515–590 form the Cytochrome b5 heme-binding domain; it reads SAQFTMSEVR…LEMYRVGELI (76 aa). Heme is bound by residues histidine 550 and histidine 573. An FAD-binding FR-type domain is found at 630–742; sequence REKVRCRLVD…KGPVGHIEYA (113 aa). FAD contacts are provided by residues 682-685, 699-703, phenylalanine 704, phenylalanine 711, 716-718, and threonine 769; these read RAYT, LIKIY, and LMS.

This sequence belongs to the nitrate reductase family. As to quaternary structure, homodimer. FAD serves as cofactor. Heme is required as a cofactor. The cofactor is Mo-molybdopterin.

It catalyses the reaction nitrite + NAD(+) + H2O = nitrate + NADH + H(+). It carries out the reaction nitrite + NADP(+) + H2O = nitrate + NADPH + H(+). Its function is as follows. Nitrate reductase is a key enzyme involved in the first step of nitrate assimilation in plants, fungi and bacteria. This Hordeum vulgare (Barley) protein is Nitrate reductase [NAD(P)H] (NAR-7).